Reading from the N-terminus, the 159-residue chain is MIAVLQRVSEARVLIEGQIVGEIGAGLLLLLCAERGDSETESDKLLSKVLKLRIFSDAAGKMNHSLQDMDGRGTAGGLLVVSQFTLAADVSGGNRPGFTLAAAPAQGRRLYDHFVAQARRAHPVVRTGQFGADMQVHLVNDGPVTIPLRMAPPAGVAPE.

The Gly-cisPro motif, important for rejection of L-amino acids signature appears at 142–143 (GP).

This sequence belongs to the DTD family. In terms of assembly, homodimer.

The protein localises to the cytoplasm. It carries out the reaction glycyl-tRNA(Ala) + H2O = tRNA(Ala) + glycine + H(+). The enzyme catalyses a D-aminoacyl-tRNA + H2O = a tRNA + a D-alpha-amino acid + H(+). In terms of biological role, an aminoacyl-tRNA editing enzyme that deacylates mischarged D-aminoacyl-tRNAs. Also deacylates mischarged glycyl-tRNA(Ala), protecting cells against glycine mischarging by AlaRS. Acts via tRNA-based rather than protein-based catalysis; rejects L-amino acids rather than detecting D-amino acids in the active site. By recycling D-aminoacyl-tRNA to D-amino acids and free tRNA molecules, this enzyme counteracts the toxicity associated with the formation of D-aminoacyl-tRNA entities in vivo and helps enforce protein L-homochirality. This chain is D-aminoacyl-tRNA deacylase, found in Albidiferax ferrireducens (strain ATCC BAA-621 / DSM 15236 / T118) (Rhodoferax ferrireducens).